The chain runs to 488 residues: ATP synthase subunit beta (488 aa).

155-162 (GGAGVGKT) contributes to the ATP binding site. The segment at 467 to 488 (GFAPDDQNTDADEKPAAQAAAN) is disordered.

The protein belongs to the ATPase alpha/beta chains family. F-type ATPases have 2 components, CF(1) - the catalytic core - and CF(0) - the membrane proton channel. CF(1) has five subunits: alpha(3), beta(3), gamma(1), delta(1), epsilon(1). CF(0) has three main subunits: a(1), b(2) and c(9-12). The alpha and beta chains form an alternating ring which encloses part of the gamma chain. CF(1) is attached to CF(0) by a central stalk formed by the gamma and epsilon chains, while a peripheral stalk is formed by the delta and b chains.

The protein localises to the cell membrane. It carries out the reaction ATP + H2O + 4 H(+)(in) = ADP + phosphate + 5 H(+)(out). Functionally, produces ATP from ADP in the presence of a proton gradient across the membrane. The catalytic sites are hosted primarily by the beta subunits. The chain is ATP synthase subunit beta from Lacticaseibacillus casei (strain BL23) (Lactobacillus casei).